The following is a 554-amino-acid chain: Glucose-6-phosphate isomerase (554 aa).

Glu358 acts as the Proton donor in catalysis. Active-site residues include His389 and Lys515. Positions 527–540 (SDGSPQRQSDSSTD) are enriched in polar residues. A disordered region spans residues 527 to 554 (SDGSPQRQSDSSTDALVRRYRTQRGRTG). Positions 544–554 (RRYRTQRGRTG) are enriched in basic residues.

Belongs to the GPI family.

It localises to the cytoplasm. It catalyses the reaction alpha-D-glucose 6-phosphate = beta-D-fructose 6-phosphate. It functions in the pathway carbohydrate biosynthesis; gluconeogenesis. Its pathway is carbohydrate degradation; glycolysis; D-glyceraldehyde 3-phosphate and glycerone phosphate from D-glucose: step 2/4. Functionally, catalyzes the reversible isomerization of glucose-6-phosphate to fructose-6-phosphate. The sequence is that of Glucose-6-phosphate isomerase from Mycobacterium ulcerans (strain Agy99).